A 240-amino-acid polypeptide reads, in one-letter code: Nudix hydrolase 3 (240 aa).

Residues 50 to 190 (NSAMSVLIPL…RMKYTLPSFD (141 aa)) form the Nudix hydrolase domain. Positions 89 to 110 (GRMDPGETTTETALRETFEEIG) match the Nudix box motif. Mg(2+) contacts are provided by glutamate 104 and glutamate 108.

The protein belongs to the Nudix hydrolase family. PCD1 subfamily. Mn(2+) is required as a cofactor. The cofactor is Mg(2+).

Probably mediates the hydrolysis of some nucleoside diphosphate derivatives. This Caenorhabditis elegans protein is Nudix hydrolase 3 (ndx-3).